Reading from the N-terminus, the 290-residue chain is Ribosomal RNA small subunit methyltransferase A (290 aa).

The S-adenosyl-L-methionine site is built by Asn27, Leu29, Gly54, Glu75, Asp100, and Asn125.

Belongs to the class I-like SAM-binding methyltransferase superfamily. rRNA adenine N(6)-methyltransferase family. RsmA subfamily.

The protein localises to the cytoplasm. The enzyme catalyses adenosine(1518)/adenosine(1519) in 16S rRNA + 4 S-adenosyl-L-methionine = N(6)-dimethyladenosine(1518)/N(6)-dimethyladenosine(1519) in 16S rRNA + 4 S-adenosyl-L-homocysteine + 4 H(+). Functionally, specifically dimethylates two adjacent adenosines (A1518 and A1519) in the loop of a conserved hairpin near the 3'-end of 16S rRNA in the 30S particle. May play a critical role in biogenesis of 30S subunits. The polypeptide is Ribosomal RNA small subunit methyltransferase A (Streptococcus pneumoniae (strain CGSP14)).